The sequence spans 395 residues: Trans-2-enoyl-CoA reductase [NADH] (395 aa).

Residues 47–52 (GASTGY), 73–74 (FE), 110–111 (DA), and 138–139 (LA) contribute to the NAD(+) site. Substrate is bound at residue tyrosine 224. Tyrosine 234 acts as the Proton donor in catalysis. NAD(+)-binding positions include lysine 243 and 272–274 (VVT).

Belongs to the TER reductase family. Monomer.

The enzyme catalyses a 2,3-saturated acyl-CoA + NAD(+) = a (2E)-enoyl-CoA + NADH + H(+). It functions in the pathway lipid metabolism; fatty acid biosynthesis. In terms of biological role, involved in the fatty acid synthesis (FAS II). Catalyzes the reduction of a carbon-carbon double bond in an enoyl moiety that is covalently linked to a coenzyme A (CoA). In Ruminiclostridium cellulolyticum (strain ATCC 35319 / DSM 5812 / JCM 6584 / H10) (Clostridium cellulolyticum), this protein is Trans-2-enoyl-CoA reductase [NADH].